Here is a 212-residue protein sequence, read N- to C-terminus: Thiamine-phosphate synthase (212 aa).

Residues 35–39 (QLRDK) and asparagine 67 each bind 4-amino-2-methyl-5-(diphosphooxymethyl)pyrimidine. Positions 68 and 87 each coordinate Mg(2+). Serine 106 serves as a coordination point for 4-amino-2-methyl-5-(diphosphooxymethyl)pyrimidine. 132 to 134 (TGS) lines the 2-[(2R,5Z)-2-carboxy-4-methylthiazol-5(2H)-ylidene]ethyl phosphate pocket. Lysine 135 is a 4-amino-2-methyl-5-(diphosphooxymethyl)pyrimidine binding site. Residues glycine 163 and 183–184 (IS) contribute to the 2-[(2R,5Z)-2-carboxy-4-methylthiazol-5(2H)-ylidene]ethyl phosphate site.

It belongs to the thiamine-phosphate synthase family. The cofactor is Mg(2+).

The catalysed reaction is 2-[(2R,5Z)-2-carboxy-4-methylthiazol-5(2H)-ylidene]ethyl phosphate + 4-amino-2-methyl-5-(diphosphooxymethyl)pyrimidine + 2 H(+) = thiamine phosphate + CO2 + diphosphate. The enzyme catalyses 2-(2-carboxy-4-methylthiazol-5-yl)ethyl phosphate + 4-amino-2-methyl-5-(diphosphooxymethyl)pyrimidine + 2 H(+) = thiamine phosphate + CO2 + diphosphate. It carries out the reaction 4-methyl-5-(2-phosphooxyethyl)-thiazole + 4-amino-2-methyl-5-(diphosphooxymethyl)pyrimidine + H(+) = thiamine phosphate + diphosphate. Its pathway is cofactor biosynthesis; thiamine diphosphate biosynthesis; thiamine phosphate from 4-amino-2-methyl-5-diphosphomethylpyrimidine and 4-methyl-5-(2-phosphoethyl)-thiazole: step 1/1. Condenses 4-methyl-5-(beta-hydroxyethyl)thiazole monophosphate (THZ-P) and 2-methyl-4-amino-5-hydroxymethyl pyrimidine pyrophosphate (HMP-PP) to form thiamine monophosphate (TMP). In Methanocella arvoryzae (strain DSM 22066 / NBRC 105507 / MRE50), this protein is Thiamine-phosphate synthase.